The chain runs to 121 residues: uncharacterized protein (121 aa).

The interval 100 to 121 (KSFSNTKDGKKNDDDNNSSSKS) is disordered.

This is an uncharacterized protein from Mycoplasma pneumoniae (strain ATCC 29342 / M129 / Subtype 1) (Mycoplasmoides pneumoniae).